A 387-amino-acid chain; its full sequence is S-adenosylmethionine synthase (387 aa).

Residue His-15 coordinates ATP. Asp-17 is a Mg(2+) binding site. Residue Glu-43 participates in K(+) binding. L-methionine-binding residues include Glu-56 and Gln-99. Residues 99-109 (QSPDIALGVNR) form a flexible loop region. ATP-binding positions include 166 to 168 (DAK), 232 to 233 (RF), Asp-241, 247 to 248 (RK), Ala-264, and Lys-268. Asp-241 provides a ligand contact to L-methionine. Lys-272 serves as a coordination point for L-methionine.

Belongs to the AdoMet synthase family. Homotetramer; dimer of dimers. Mg(2+) is required as a cofactor. The cofactor is K(+).

It localises to the cytoplasm. The catalysed reaction is L-methionine + ATP + H2O = S-adenosyl-L-methionine + phosphate + diphosphate. It participates in amino-acid biosynthesis; S-adenosyl-L-methionine biosynthesis; S-adenosyl-L-methionine from L-methionine: step 1/1. Catalyzes the formation of S-adenosylmethionine (AdoMet) from methionine and ATP. The overall synthetic reaction is composed of two sequential steps, AdoMet formation and the subsequent tripolyphosphate hydrolysis which occurs prior to release of AdoMet from the enzyme. The protein is S-adenosylmethionine synthase of Nitrosomonas eutropha (strain DSM 101675 / C91 / Nm57).